The following is a 63-amino-acid chain: Arabinogalactan peptide 3 (63 aa).

Residues 1-26 (MASRILYAAAVVAAVAVSSLAGVAYA) form the signal peptide. S36 is lipidated: GPI-anchor amidated serine. The propeptide at 37–63 (GAAAVSSSLVAAVLCPAVALLLGNLRQ) is removed in mature form.

It belongs to the AG-peptide AGP family. O-glycosylated on hydroxyprolines; noncontiguous hydroxylproline residues are glycosylated with arabinogalactan. In terms of tissue distribution, expressed in roots, stems, leaves, flowers and seeds.

The protein localises to the vacuole. The protein resides in the aleurone grain membrane. Proteoglycan that seems to be implicated in diverse developmental roles such as differentiation, cell-cell recognition, embryogenesis and programmed cell death. The protein is Arabinogalactan peptide 3 (AGPEP3) of Oryza sativa subsp. japonica (Rice).